We begin with the raw amino-acid sequence, 555 residues long: Synaptotagmin-14 (555 aa).

Over 1-24 the chain is Extracellular; it reads MAIEGGERTCGVHELICIRKVSPE. The helical; Signal-anchor for type III membrane protein transmembrane segment at 25–47 threads the bilayer; that stretch reads AVGFLSAVGVFIILMLLLFLYIN. Over 48–555 the chain is Cytoplasmic; the sequence is KKFCFENVGG…VCRWHALLES (508 aa). 2 disordered regions span residues 157 to 179 and 222 to 257; these read TPPL…HLSC and GYEE…DPEP. C2 domains are found at residues 260–379 and 415–550; these read KYGT…SLPV and SVPE…CRWH.

It belongs to the synaptotagmin family. Homodimer. Can also form heterodimers. Highly expressed in fetal and adult brain tissue.

It is found in the membrane. May be involved in the trafficking and exocytosis of secretory vesicles in non-neuronal tissues. Is Ca(2+)-independent. The sequence is that of Synaptotagmin-14 (SYT14) from Homo sapiens (Human).